Here is a 778-residue protein sequence, read N- to C-terminus: ATP synthase subunit beta (778 aa).

The unknown stretch occupies residues M1–L289. The interval M290–N778 is ATP synthase subunit beta. ATP is bound at residue G447–T454.

The protein belongs to the ATPase alpha/beta chains family. As to quaternary structure, F-type ATPases have 2 components, CF(1) - the catalytic core - and CF(0) - the membrane proton channel. CF(1) has five subunits: alpha(3), beta(3), gamma(1), delta(1), epsilon(1). CF(0) has three main subunits: a(1), b(2) and c(9-12). The alpha and beta chains form an alternating ring which encloses part of the gamma chain. CF(1) is attached to CF(0) by a central stalk formed by the gamma and epsilon chains, while a peripheral stalk is formed by the delta and b chains.

Its subcellular location is the cell membrane. The catalysed reaction is ATP + H2O + 4 H(+)(in) = ADP + phosphate + 5 H(+)(out). Functionally, produces ATP from ADP in the presence of a proton gradient across the membrane. The catalytic sites are hosted primarily by the beta subunits. This chain is ATP synthase subunit beta (atpD), found in Malacoplasma penetrans (strain HF-2) (Mycoplasma penetrans).